The following is a 507-amino-acid chain: Cytochrome P450 monooxygenase ptmU (507 aa).

Residues 4-24 traverse the membrane as a helical segment; the sequence is VNAWWVGGSLLLGIWAIVVFF. Residues Asn98, Asn202, and Asn398 are each glycosylated (N-linked (GlcNAc...) asparagine). Cys444 provides a ligand contact to heme.

Belongs to the cytochrome P450 family. Heme serves as cofactor.

The protein resides in the membrane. It participates in secondary metabolite biosynthesis. Cytochrome P450 monooxygenase; part of the gene cluster that mediates the biosynthesis of the indole diterpenes penitrems. The geranylgeranyl diphosphate (GGPP) synthase ptmG catalyzes the first step in penitrem biosynthesis via conversion of farnesyl pyrophosphate and isopentyl pyrophosphate into geranylgeranyl pyrophosphate (GGPP). Condensation of indole-3-glycerol phosphate with GGPP by the prenyl transferase ptmC then forms 3-geranylgeranylindole (3-GGI). Epoxidation by the FAD-dependent monooxygenase ptmM leads to a epoxidized-GGI that is substrate of the terpene cyclase ptmB for cyclization to yield paspaline. Paspaline is subsequently converted to 13-desoxypaxilline by the cytochrome P450 monooxygenase ptmP, the latter being then converted to paxilline by the cytochrome P450 monooxygenase ptmQ. Paxilline is converted to beta-paxitriol via C-10 ketoreduction by the short-chain dehydrogenase ptmH which can be monoprenylated at the C-20 by the indole diterpene prenyltransferase ptmD. A two-step elimination (acetylation and elimination) process performed by the O-acetyltransferase ptmV and ptmI leads to the production of the prenylated form of penijanthine. The FAD-linked oxidoreductase ptmO then converts the prenylated form of penijanthine into PC-M5 which is in turn transformed into PC-M4 by the aromatic dimethylallyltransferase ptmE. Five sequential oxidative transformations performed by the cytochrome P450 monooxygenases ptmK, ptmU, ptmL, ptmN and ptmJ yield the various penitrem compounds. PtmK, ptmU and ptmM are involved in the formation of the key bicyclic ring of penitrem C via the formation of the intermediates secopenitrem D and penitrem D. PtmL catalyzes the epoxidation of penitrem D and C to yield penitrem B and F, respectively. PtmJ catalyzes the last benzylic hydroxylation to convert penitrem B to prenitrem E and penitrem F to penitrem A. This is Cytochrome P450 monooxygenase ptmU from Penicillium ochrochloron.